The following is a 210-amino-acid chain: Large ribosomal subunit protein uL4 (210 aa).

The tract at residues 46 to 89 is disordered; the sequence is QGTASTLTRSEVRGGGRKPYKQKGTGRARQGSIRTPLRPGGGII. The span at 60–71 shows a compositional bias: basic residues; it reads GGRKPYKQKGTG.

The protein belongs to the universal ribosomal protein uL4 family. As to quaternary structure, part of the 50S ribosomal subunit.

Its function is as follows. One of the primary rRNA binding proteins, this protein initially binds near the 5'-end of the 23S rRNA. It is important during the early stages of 50S assembly. It makes multiple contacts with different domains of the 23S rRNA in the assembled 50S subunit and ribosome. Forms part of the polypeptide exit tunnel. The sequence is that of Large ribosomal subunit protein uL4 from Prochlorococcus marinus (strain MIT 9215).